An 83-amino-acid chain; its full sequence is Small ribosomal subunit protein uS17 (83 aa).

The protein belongs to the universal ribosomal protein uS17 family. Part of the 30S ribosomal subunit.

Its function is as follows. One of the primary rRNA binding proteins, it binds specifically to the 5'-end of 16S ribosomal RNA. This is Small ribosomal subunit protein uS17 from Chlamydia abortus (strain DSM 27085 / S26/3) (Chlamydophila abortus).